A 1104-amino-acid chain; its full sequence is Translation initiation factor IF-2 (1104 aa).

Disordered stretches follow at residues 51–444 (SLLG…LAAQ) and 461–497 (LARP…RRRA). Low complexity-rich tracts occupy residues 60 to 119 (AKPA…KPQA) and 127 to 164 (ATPK…AAKP). The span at 189–202 (APTPRPTPARPTPR) shows a compositional bias: pro residues. Low complexity-rich tracts occupy residues 203–215 (PAGA…PTPG), 227–246 (GAPS…KPGA), 311–336 (STTG…PAGM), and 366–396 (PTKA…SFRP). The segment covering 406-420 (GRPDWDDSARLDALR) has biased composition (basic and acidic residues). Residues 481-495 (MRKRKKETARQRQRR) show a composition bias toward basic residues. The 173-residue stretch at 596–768 (RRPPVVTVMG…LLLVTEVEDL (173 aa)) folds into the tr-type G domain. The G1 stretch occupies residues 605–612 (GHVDHGKT). Position 605 to 612 (605 to 612 (GHVDHGKT)) interacts with GTP. Positions 630–634 (GITQH) are G2. Residues 655 to 658 (DTPG) are G3. GTP-binding positions include 655–659 (DTPGH) and 709–712 (NKID). The G4 stretch occupies residues 709–712 (NKID). Residues 745 to 747 (SAI) form a G5 region.

This sequence belongs to the TRAFAC class translation factor GTPase superfamily. Classic translation factor GTPase family. IF-2 subfamily.

Its subcellular location is the cytoplasm. In terms of biological role, one of the essential components for the initiation of protein synthesis. Protects formylmethionyl-tRNA from spontaneous hydrolysis and promotes its binding to the 30S ribosomal subunits. Also involved in the hydrolysis of GTP during the formation of the 70S ribosomal complex. This is Translation initiation factor IF-2 from Synechococcus sp. (strain CC9605).